The sequence spans 364 residues: Delta(7)-sterol 5(6)-desaturase (364 aa).

The next 3 helical transmembrane spans lie at 94–114, 142–162, and 181–201; these read FFSLWAVVTVFGLLLYLITAS, LAVSAIPTMSLLTVPWFMLEL, and KLLIEYATFIFFTDCGIYLAH. A Fatty acid hydroxylase domain is found at 188 to 312; that stretch reads TFIFFTDCGI…FTTLWDRLGG (125 aa). Positions 201 to 205 match the Histidine box-1 motif; sequence HRWLH. The short motif at 214 to 218 is the Histidine box-2 element; the sequence is HKPHH. The helical transmembrane segment at 249–269 threads the bilayer; that stretch reads ILPLHKISYLILFTFVNFWSV. A Histidine box-3 motif is present at residues 289–293; sequence HTVHH.

This sequence belongs to the sterol desaturase family. Requires Fe cation as cofactor.

The protein localises to the endoplasmic reticulum membrane. It catalyses the reaction a Delta(7)-sterol + 2 Fe(II)-[cytochrome b5] + O2 + 2 H(+) = a Delta(5),Delta(7)-sterol + 2 Fe(III)-[cytochrome b5] + 2 H2O. It functions in the pathway steroid metabolism; ergosterol biosynthesis; ergosterol from zymosterol: step 3/5. Catalyzes the introduction of a C-5 double bond in the B ring of ergosterol. May contribute to the regulation of ergosterol biosynthesis. This Candida glabrata (strain ATCC 2001 / BCRC 20586 / JCM 3761 / NBRC 0622 / NRRL Y-65 / CBS 138) (Yeast) protein is Delta(7)-sterol 5(6)-desaturase (ERG3).